The following is a 265-amino-acid chain: Glutamate racemase (265 aa).

Substrate is bound by residues 9–10 (DS) and 41–42 (YG). Cys72 (proton donor/acceptor) is an active-site residue. 73 to 74 (NT) serves as a coordination point for substrate. Cys183 (proton donor/acceptor) is an active-site residue. A substrate-binding site is contributed by 184-185 (TH).

It belongs to the aspartate/glutamate racemases family.

It carries out the reaction L-glutamate = D-glutamate. It functions in the pathway cell wall biogenesis; peptidoglycan biosynthesis. Functionally, provides the (R)-glutamate required for cell wall biosynthesis. This chain is Glutamate racemase, found in Lysinibacillus sphaericus (Bacillus sphaericus).